The primary structure comprises 467 residues: Chromosomal replication initiator protein DnaA (467 aa).

The tract at residues 1-85 (MSLSLWQQCL…FEVGAKPASS (85 aa)) is domain I, interacts with DnaA modulators. Positions 85–130 (SLQKGAVSPAAAAIPAAQVQTARVAPTIVRPGWDNVPAPAEPTYRS) are domain II. Residues 131–347 (NVNVKHTFDN…GALNRVIANA (217 aa)) form a domain III, AAA+ region region. The ATP site is built by G175, G177, K178, and T179. The domain IV, binds dsDNA stretch occupies residues 348-467 (NFTGRAITID…FSNLIRTLSS (120 aa)).

Belongs to the DnaA family. Oligomerizes as a right-handed, spiral filament on DNA at oriC.

The protein localises to the cytoplasm. Plays an essential role in the initiation and regulation of chromosomal replication. ATP-DnaA binds to the origin of replication (oriC) to initiate formation of the DNA replication initiation complex once per cell cycle. Binds the DnaA box (a 9 base pair repeat at the origin) and separates the double-stranded (ds)DNA. Forms a right-handed helical filament on oriC DNA; dsDNA binds to the exterior of the filament while single-stranded (ss)DNA is stabiized in the filament's interior. The ATP-DnaA-oriC complex binds and stabilizes one strand of the AT-rich DNA unwinding element (DUE), permitting loading of DNA polymerase. After initiation quickly degrades to an ADP-DnaA complex that is not apt for DNA replication. Binds acidic phospholipids. The chain is Chromosomal replication initiator protein DnaA from Klebsiella pneumoniae (strain 342).